Here is a 388-residue protein sequence, read N- to C-terminus: 1-deoxy-D-xylulose 5-phosphate reductoisomerase (388 aa).

NADPH contacts are provided by Thr10, Gly11, Thr12, Ile13, Arg37, Gln38, and Asn122. Lys123 is a binding site for 1-deoxy-D-xylulose 5-phosphate. Position 124 (Glu124) interacts with NADPH. Asp148 lines the Mn(2+) pocket. 4 residues coordinate 1-deoxy-D-xylulose 5-phosphate: Ser149, Glu150, Ser179, and His202. Glu150 provides a ligand contact to Mn(2+). Gly208 provides a ligand contact to NADPH. 1-deoxy-D-xylulose 5-phosphate is bound by residues Ser215, Asn220, Lys221, and Glu224. Glu224 is a Mn(2+) binding site.

The protein belongs to the DXR family. Mg(2+) serves as cofactor. Mn(2+) is required as a cofactor.

It carries out the reaction 2-C-methyl-D-erythritol 4-phosphate + NADP(+) = 1-deoxy-D-xylulose 5-phosphate + NADPH + H(+). It participates in isoprenoid biosynthesis; isopentenyl diphosphate biosynthesis via DXP pathway; isopentenyl diphosphate from 1-deoxy-D-xylulose 5-phosphate: step 1/6. In terms of biological role, catalyzes the NADPH-dependent rearrangement and reduction of 1-deoxy-D-xylulose-5-phosphate (DXP) to 2-C-methyl-D-erythritol 4-phosphate (MEP). This Laribacter hongkongensis (strain HLHK9) protein is 1-deoxy-D-xylulose 5-phosphate reductoisomerase.